A 1056-amino-acid chain; its full sequence is Carbamoyl phosphate synthase large chain (1056 aa).

Positions 1 to 397 (MPKKSHIKKV…AFKKALRSLD (397 aa)) are carboxyphosphate synthetic domain. Residues Arg-127, Arg-167, Gly-173, Gly-174, Glu-206, Val-208, Glu-213, Gly-239, Ile-240, His-241, Gln-282, and Glu-294 each coordinate ATP. The ATP-grasp 1 domain occupies 131-323 (RDLMNAIGEP…IARVAAKIAI (193 aa)). Residues Gln-282, Glu-294, and Asn-296 each contribute to the Mg(2+) site. Mn(2+)-binding residues include Gln-282, Glu-294, and Asn-296. Positions 398-530 (NDMQQHTNPS…YSTWEEGCEL (133 aa)) are oligomerization domain. The tract at residues 531–920 (VRDSAKKVLI…YKACTAADNT (390 aa)) is carbamoyl phosphate synthetic domain. Residues 662–853 (SRLLTRLEIP…LAKIAAKVMV (192 aa)) enclose the ATP-grasp 2 domain. 10 residues coordinate ATP: Arg-698, Ser-737, Leu-739, Glu-744, Gly-769, Val-770, His-771, Ser-772, Gln-812, and Glu-824. Mg(2+) is bound by residues Gln-812, Glu-824, and Asn-826. Gln-812, Glu-824, and Asn-826 together coordinate Mn(2+). The 138-residue stretch at 919-1056 (NTLPTTGNVF…EPLGHYHGLM (138 aa)) folds into the MGS-like domain. An allosteric domain region spans residues 921-1056 (LPTTGNVFIS…EPLGHYHGLM (136 aa)).

Belongs to the CarB family. As to quaternary structure, composed of two chains; the small (or glutamine) chain promotes the hydrolysis of glutamine to ammonia, which is used by the large (or ammonia) chain to synthesize carbamoyl phosphate. Tetramer of heterodimers (alpha,beta)4. Requires Mg(2+) as cofactor. It depends on Mn(2+) as a cofactor.

The enzyme catalyses hydrogencarbonate + L-glutamine + 2 ATP + H2O = carbamoyl phosphate + L-glutamate + 2 ADP + phosphate + 2 H(+). The catalysed reaction is hydrogencarbonate + NH4(+) + 2 ATP = carbamoyl phosphate + 2 ADP + phosphate + 2 H(+). It participates in amino-acid biosynthesis; L-arginine biosynthesis; carbamoyl phosphate from bicarbonate: step 1/1. The protein operates within pyrimidine metabolism; UMP biosynthesis via de novo pathway; (S)-dihydroorotate from bicarbonate: step 1/3. In terms of biological role, large subunit of the glutamine-dependent carbamoyl phosphate synthetase (CPSase). CPSase catalyzes the formation of carbamoyl phosphate from the ammonia moiety of glutamine, carbonate, and phosphate donated by ATP, constituting the first step of 2 biosynthetic pathways, one leading to arginine and/or urea and the other to pyrimidine nucleotides. The large subunit (synthetase) binds the substrates ammonia (free or transferred from glutamine from the small subunit), hydrogencarbonate and ATP and carries out an ATP-coupled ligase reaction, activating hydrogencarbonate by forming carboxy phosphate which reacts with ammonia to form carbamoyl phosphate. The chain is Carbamoyl phosphate synthase large chain from Methanoculleus marisnigri (strain ATCC 35101 / DSM 1498 / JR1).